The following is a 79-amino-acid chain: Dolichol phosphate-mannose biosynthesis regulatory protein (79 aa).

2 consecutive transmembrane segments (helical) span residues 8–28 and 50–70; these read IGFVMVLFRIFVFGYYTTWVI and IIIPLVLLVVGITAIGTFLGL.

Belongs to the DPM2 family. In terms of assembly, component of the dolichol-phosphate mannose (DPM) synthase complex composed of dpm1, dpm2 and dpm3.

Its subcellular location is the endoplasmic reticulum membrane. The protein operates within protein modification; protein glycosylation. Its function is as follows. Regulates the biosynthesis of dolichol phosphate-mannose. Regulatory subunit of the dolichol-phosphate mannose (DPM) synthase complex; essential for the ER localization and stable expression of dpm1. This is Dolichol phosphate-mannose biosynthesis regulatory protein (dpm2-1) from Dictyostelium discoideum (Social amoeba).